A 239-amino-acid polypeptide reads, in one-letter code: Fatty acid metabolism regulator protein (239 aa).

The 69-residue stretch at 6–74 (KGPASFAEKY…HGKPTRVNNF (69 aa)) folds into the HTH gntR-type domain. The segment at residues 34–53 (ERELSELIGVTRTTLREVLQ) is a DNA-binding region (H-T-H motif).

As to quaternary structure, homodimer.

The protein localises to the cytoplasm. Its function is as follows. Multifunctional regulator of fatty acid metabolism. This is Fatty acid metabolism regulator protein from Shewanella halifaxensis (strain HAW-EB4).